Here is a 526-residue protein sequence, read N- to C-terminus: Tyrosine-protein kinase transforming protein Src (526 aa).

The segment covering 1–15 has biased composition (basic residues); sequence MGSSKSKPKGPSQRR. Residues 1–59 form a disordered region; that stretch reads MGSSKSKPKGPSQRRRSLEPPDSTHHGGFPASQTPNKTAAPDTHRTPSRSFGTVATEPK. Gly-2 carries N-myristoyl glycine; by host lipidation. The span at 16–25 shows a compositional bias: basic and acidic residues; the sequence is RSLEPPDSTH. Residues 81–142 form the SH3 domain; sequence GGVTTFVALY…PSNYVAPSDS (62 aa). An SH2 domain is found at 148 to 245; it reads WYFGKITRRE…GLCHRLTNVC (98 aa). Residues 267 to 517 enclose the Protein kinase domain; it reads LRLEVKLGQG…TFEYLQAQLL (251 aa). Residues 273 to 281 and Lys-295 contribute to the ATP site; that span reads LGQGCFGEV. The active-site Proton acceptor is the Asp-386. At Tyr-416 the chain carries Phosphotyrosine; by autocatalysis.

The protein belongs to the protein kinase superfamily. Tyr protein kinase family. SRC subfamily. Homodimer. The phosphorylated form is termed pp60v-src.

It catalyses the reaction L-tyrosyl-[protein] + ATP = O-phospho-L-tyrosyl-[protein] + ADP + H(+). Its function is as follows. This phosphoprotein, required for both the initiation and the maintenance of neoplastic transformation, is a protein kinase that catalyzes the phosphorylation of tyrosine residues in vitro. The polypeptide is Tyrosine-protein kinase transforming protein Src (V-SRC) (Rous sarcoma virus subgroup E (strain Schmidt-Ruppin) (RSV-SR-E)).